The chain runs to 217 residues: Uracil phosphoribosyltransferase (217 aa).

5-phospho-alpha-D-ribose 1-diphosphate-binding positions include arginine 84, arginine 109, and 137-145 (DPMLATGGS). Uracil contacts are provided by residues isoleucine 202 and 207–209 (GDA). A 5-phospho-alpha-D-ribose 1-diphosphate-binding site is contributed by aspartate 208.

It belongs to the UPRTase family. Mg(2+) is required as a cofactor.

The catalysed reaction is UMP + diphosphate = 5-phospho-alpha-D-ribose 1-diphosphate + uracil. Its pathway is pyrimidine metabolism; UMP biosynthesis via salvage pathway; UMP from uracil: step 1/1. With respect to regulation, allosterically activated by GTP. Functionally, catalyzes the conversion of uracil and 5-phospho-alpha-D-ribose 1-diphosphate (PRPP) to UMP and diphosphate. The sequence is that of Uracil phosphoribosyltransferase from Synechococcus elongatus (strain ATCC 33912 / PCC 7942 / FACHB-805) (Anacystis nidulans R2).